Reading from the N-terminus, the 412-residue chain is Peptidase T (412 aa).

Histidine 84 contributes to the Zn(2+) binding site. Aspartate 86 is a catalytic residue. A Zn(2+)-binding site is contributed by aspartate 146. Catalysis depends on glutamate 179, which acts as the Proton acceptor. Residues glutamate 180, aspartate 202, and histidine 385 each contribute to the Zn(2+) site.

Belongs to the peptidase M20B family. It depends on Zn(2+) as a cofactor.

The protein localises to the cytoplasm. The catalysed reaction is Release of the N-terminal residue from a tripeptide.. Its function is as follows. Cleaves the N-terminal amino acid of tripeptides. This Pasteurella multocida (strain Pm70) protein is Peptidase T.